A 248-amino-acid chain; its full sequence is MGMDAWDGKQAAPPRRARRWLRWLMAAPLLFAAASVLQVLILRVVDPPISSMMVGRYLEAWGEGDWRFSLHQQWRDYDKIAASLPILVVAAEDQQFPMHHGFDLQAIEKARDHNARGGRVRGASTISQQVAKNVFLWQGRSWVRKGLEAWYTVLIELFWPKQRILEMYLNVAEFGDGVYGAQAAAQQFWSKDAAGLSPSESARLAAVLPSPRRYDARRPGAFVQRRATWIQRQARQLGGPVYLQGPSR.

A helical membrane pass occupies residues 20-42 (WLRWLMAAPLLFAAASVLQVLIL).

Belongs to the glycosyltransferase 51 family.

The protein localises to the cell inner membrane. It carries out the reaction [GlcNAc-(1-&gt;4)-Mur2Ac(oyl-L-Ala-gamma-D-Glu-L-Lys-D-Ala-D-Ala)](n)-di-trans,octa-cis-undecaprenyl diphosphate + beta-D-GlcNAc-(1-&gt;4)-Mur2Ac(oyl-L-Ala-gamma-D-Glu-L-Lys-D-Ala-D-Ala)-di-trans,octa-cis-undecaprenyl diphosphate = [GlcNAc-(1-&gt;4)-Mur2Ac(oyl-L-Ala-gamma-D-Glu-L-Lys-D-Ala-D-Ala)](n+1)-di-trans,octa-cis-undecaprenyl diphosphate + di-trans,octa-cis-undecaprenyl diphosphate + H(+). Its pathway is cell wall biogenesis; peptidoglycan biosynthesis. Peptidoglycan polymerase that catalyzes glycan chain elongation from lipid-linked precursors. This chain is Biosynthetic peptidoglycan transglycosylase, found in Xanthomonas euvesicatoria pv. vesicatoria (strain 85-10) (Xanthomonas campestris pv. vesicatoria).